The sequence spans 155 residues: Large ribosomal subunit protein uL13 (155 aa).

The protein belongs to the universal ribosomal protein uL13 family. As to quaternary structure, part of the 50S ribosomal subunit.

In terms of biological role, this protein is one of the early assembly proteins of the 50S ribosomal subunit, although it is not seen to bind rRNA by itself. It is important during the early stages of 50S assembly. This is Large ribosomal subunit protein uL13 from Rickettsia felis (strain ATCC VR-1525 / URRWXCal2) (Rickettsia azadi).